The following is a 440-amino-acid chain: T-box transcription factor T homolog 2 (440 aa).

Residues 44–215 (LWEKFKSLTN…HNPFAKAFLD (172 aa)) constitute a DNA-binding region (T-box). 2 disordered regions span residues 282–303 (APYPHPYQRSSPPTNYGHDTAA) and 393–440 (TTAS…MPSM). A compositionally biased stretch (polar residues) spans 409–440 (STDSGYGHSTTPPAPQTRITSNNWSPMTMPSM).

As to expression, mesoderm and notochord.

It is found in the nucleus. Involved in the transcriptional regulation of genes required for mesoderm formation and differentiation. The protein is T-box transcription factor T homolog 2 of Branchiostoma floridae (Florida lancelet).